An 85-amino-acid polypeptide reads, in one-letter code: Beta-insect depressant toxin Lqh-dprIT3c (85 aa).

Residues 1–21 (MKLLLLLTISASMLIEGLVNA) form the signal peptide. An LCN-type CS-alpha/beta domain is found at 22–82 (DGYIRGGDGC…EWDYETNTCG (61 aa)). Cystine bridges form between C31–C81, C35–C56, C42–C63, and C46–C65. G82 carries the post-translational modification Glycine amide.

The protein belongs to the long (4 C-C) scorpion toxin superfamily. Sodium channel inhibitor family. Beta subfamily. In terms of tissue distribution, expressed by the venom gland.

It is found in the secreted. In terms of biological role, depressant insect beta-toxins cause a transient contraction paralysis followed by a slow flaccid paralysis. They bind voltage-independently at site-4 of sodium channels (Nav) and block action potentials, primarily by depolarizing the axonal membrane and suppressing the sodium current. This depressant toxin is active only on insects. It is found in a relatively small amount in the venom, and its activity on insects is 10-fold higher compared to other known depressant toxins. The sequence is that of Beta-insect depressant toxin Lqh-dprIT3c from Leiurus hebraeus (Hebrew deathstalker scorpion).